The following is a 161-amino-acid chain: Ribosome maturation factor RimP (161 aa).

This sequence belongs to the RimP family.

The protein resides in the cytoplasm. In terms of biological role, required for maturation of 30S ribosomal subunits. The chain is Ribosome maturation factor RimP from Janthinobacterium sp. (strain Marseille) (Minibacterium massiliensis).